Reading from the N-terminus, the 1227-residue chain is Tyrosine-protein kinase receptor ver-3 (1227 aa).

The N-terminal stretch at 1–17 (MKLKLTVLLILVHASAS) is a signal peptide. At 18 to 764 (YKPPAIEVED…VQVNNAPKGS (747 aa)) the chain is on the extracellular side. The Ig-like C2-type 1 domain maps to 20–110 (PPAIEVEDYQ…RESDTGTYSC (91 aa)). A disulfide bridge connects residues Cys52 and Cys110. 7 N-linked (GlcNAc...) asparagine glycosylation sites follow: Asn119, Asn211, Asn245, Asn255, Asn381, Asn425, and Asn528. In terms of domain architecture, Ig-like C2-type 2 spans 200–325 (VNFECRYKKE…EHENKETKYT (126 aa)). The cysteines at positions 204 and 313 are disulfide-linked. Ig-like C2-type domains follow at residues 565–666 (PHHE…TSID) and 673–758 (PSIT…VQVN). 2 disulfide bridges follow: Cys592/Cys650 and Cys696/Cys740. N-linked (GlcNAc...) asparagine glycosylation is present at Asn697. A helical transmembrane segment spans residues 765 to 785 (LFFYWFLALLLLISIIAVFLL). Over 786–1227 (TCKLRASNRL…ERYLIVESHA (442 aa)) the chain is Cytoplasmic. The Protein kinase domain occupies 847 to 1175 (LEILNPIGSG…HMRDSSSQFL (329 aa)). ATP is bound by residues 853–861 (IGSGHFGVV) and Lys886. The active-site Proton acceptor is Asp1030. The disordered stretch occupies residues 1194–1227 (DWIQDSRPDVPNVSFQKSPKKQKEERYLIVESHA). Positions 1214-1227 (KQKEERYLIVESHA) are enriched in basic and acidic residues.

This sequence belongs to the protein kinase superfamily. Tyr protein kinase family. As to expression, expressed in the ALA neuron.

It is found in the cell membrane. It carries out the reaction L-tyrosyl-[protein] + ATP = O-phospho-L-tyrosyl-[protein] + ADP + H(+). Functionally, receptor tyrosine kinase which may be involved, downstream of pvf-1, in the positioning of ray 1, the most anterior ray sensillum in the male tail. The chain is Tyrosine-protein kinase receptor ver-3 from Caenorhabditis elegans.